The following is a 651-amino-acid chain: Nucleolin (651 aa).

Low complexity predominate over residues 1–11 (MVKLAKGAKTQ). The tract at residues 1-230 (MVKLAKGAKT…AKKTKTDTAS (230 aa)) is disordered. Residues 26–45 (EDSEEEEDMEEDDSSDEEVE) show a composition bias toward acidic residues. The segment covering 54-79 (KKTATPAKATPGKAATPGKKGATPAK) has biased composition (low complexity). Over residues 89-101 (SEEEEDDSDEEAE) the composition is skewed to acidic residues. Over residues 106–116 (IKNKPVAKKAV) the composition is skewed to basic residues. 3 stretches are compositionally biased toward acidic residues: residues 122-134 (SEED…ESEE), 155-168 (SEEE…DEPM), and 183-204 (AEED…EEEQ). S155 is modified (phosphoserine). Basic and acidic residues predominate over residues 219 to 228 (PEAKKTKTDT). RRM domains follow at residues 233–309 (LSIF…KAMA), 325–399 (RTLF…FTGE), 415–488 (KVLV…FSQG), and 503–578 (KTLF…FAKP). Residues 574 to 651 (DFAKPKGDSQ…GQGKKMRFDD (78 aa)) are disordered. Gly residues predominate over residues 585–644 (GGRGGFGRGGGFRGGRGGRGGGGGRGFGGRGGGRGRGGFGGRGGGGFRGGQGGGFRGGQG).

The protein resides in the nucleus. It localises to the nucleolus. In terms of biological role, nucleolin is the major nucleolar protein of growing eukaryotic cells. It is found associated with intranucleolar chromatin and pre-ribosomal particles. It induces chromatin decondensation by binding to histone H1. It is thought to play a role in pre-rRNA transcription and ribosome assembly. The sequence is that of Nucleolin (ncl) from Xenopus laevis (African clawed frog).